Reading from the N-terminus, the 349-residue chain is Small ribosomal subunit biogenesis GTPase RsgA (349 aa).

Over residues 1–11 (MSKKKLSKGQQ) the composition is skewed to basic residues. The disordered stretch occupies residues 1 to 29 (MSKKKLSKGQQRRVSANHQRRLKKTESKV). A CP-type G domain is found at 102–272 (HSVLTRPDYY…VIDSPGVREF (171 aa)). GTP contacts are provided by residues 158–161 (NKID) and 212–220 (GQSGVGKSS). Residues Cys-296, Cys-301, His-303, and Cys-309 each contribute to the Zn(2+) site.

The protein belongs to the TRAFAC class YlqF/YawG GTPase family. RsgA subfamily. Monomer. Associates with 30S ribosomal subunit, binds 16S rRNA. The cofactor is Zn(2+).

Its subcellular location is the cytoplasm. Functionally, one of several proteins that assist in the late maturation steps of the functional core of the 30S ribosomal subunit. Helps release RbfA from mature subunits. May play a role in the assembly of ribosomal proteins into the subunit. Circularly permuted GTPase that catalyzes slow GTP hydrolysis, GTPase activity is stimulated by the 30S ribosomal subunit. This Pectobacterium carotovorum subsp. carotovorum (strain PC1) protein is Small ribosomal subunit biogenesis GTPase RsgA.